Consider the following 282-residue polypeptide: MTAQLIDGNALSRQLRTEVAARTAALKDRGITPGLAVVLVGDNPASQVYVRNKVKACEDVGFHSVLEKYDASMTEEQLLARVQALNNDPSIHGILVQLPLPKHIDDHKVIEAISPLKDVDGFHVASAGALMVGQVGFKACTPYGCMKMLESIGMKDLRGKHAVVIGRSNIVGKPMAMMLLAANATVTVCHSGTADLAAMTRQADVVVAAVGKRNVLTADMVKPGAVVIDVGMNRNDEGKLCGDVDFEGVKQVAGYITPVPGGVGPMTITMLLVNTLEAAERL.

NADP(+)-binding positions include 166–168 and Ser-191; that span reads GRS.

This sequence belongs to the tetrahydrofolate dehydrogenase/cyclohydrolase family. In terms of assembly, homodimer.

It catalyses the reaction (6R)-5,10-methylene-5,6,7,8-tetrahydrofolate + NADP(+) = (6R)-5,10-methenyltetrahydrofolate + NADPH. The enzyme catalyses (6R)-5,10-methenyltetrahydrofolate + H2O = (6R)-10-formyltetrahydrofolate + H(+). It participates in one-carbon metabolism; tetrahydrofolate interconversion. Functionally, catalyzes the oxidation of 5,10-methylenetetrahydrofolate to 5,10-methenyltetrahydrofolate and then the hydrolysis of 5,10-methenyltetrahydrofolate to 10-formyltetrahydrofolate. The sequence is that of Bifunctional protein FolD from Acidovorax sp. (strain JS42).